The following is a 424-amino-acid chain: Adenylosuccinate synthetase 2 (424 aa).

GTP is bound by residues 11 to 17 (GDEGKGK) and 39 to 41 (GHT). Asp12 acts as the Proton acceptor in catalysis. Mg(2+) contacts are provided by Asp12 and Gly39. IMP-binding positions include 12-15 (DEGK), 37-40 (NAGH), Thr127, Arg141, Gln223, Thr238, and Arg302. His40 acts as the Proton donor in catalysis. 298-304 (TTTGRGR) lines the substrate pocket. GTP is bound by residues Arg304, 330 to 332 (KLD), and 412 to 414 (SVG).

It belongs to the adenylosuccinate synthetase family. In terms of assembly, homodimer. The cofactor is Mg(2+).

It localises to the cytoplasm. The catalysed reaction is IMP + L-aspartate + GTP = N(6)-(1,2-dicarboxyethyl)-AMP + GDP + phosphate + 2 H(+). It functions in the pathway purine metabolism; AMP biosynthesis via de novo pathway; AMP from IMP: step 1/2. Plays an important role in the de novo pathway of purine nucleotide biosynthesis. Catalyzes the first committed step in the biosynthesis of AMP from IMP. The polypeptide is Adenylosuccinate synthetase 2 (Methanosarcina acetivorans (strain ATCC 35395 / DSM 2834 / JCM 12185 / C2A)).